We begin with the raw amino-acid sequence, 403 residues long: D-alanyl-D-alanine carboxypeptidase DacA (403 aa).

An N-terminal signal peptide occupies residues 1-29 (MNTIFSARIMKRLALTTALCTAFISAAHA). Serine 73 functions as the Acyl-ester intermediate in the catalytic mechanism. Lysine 76 acts as the Proton acceptor in catalysis. The active site involves serine 139. Lysine 242 contacts substrate.

The protein belongs to the peptidase S11 family.

Its subcellular location is the cell inner membrane. The catalysed reaction is Preferential cleavage: (Ac)2-L-Lys-D-Ala-|-D-Ala. Also transpeptidation of peptidyl-alanyl moieties that are N-acyl substituents of D-alanine.. It participates in cell wall biogenesis; peptidoglycan biosynthesis. Functionally, removes C-terminal D-alanyl residues from sugar-peptide cell wall precursors. This chain is D-alanyl-D-alanine carboxypeptidase DacA (dacA), found in Escherichia coli O157:H7.